Reading from the N-terminus, the 363-residue chain is Fructose-bisphosphate aldolase C (363 aa).

Phosphotyrosine is present on tyrosine 5. 3 positions are modified to phosphoserine: serine 36, serine 39, and serine 45. Arginine 56 provides a ligand contact to substrate. Lysine 111 bears the N6-acetyllysine mark. Lysine 147 serves as a coordination point for substrate. The active-site Proton acceptor is the glutamate 188. Residue lysine 230 is the Schiff-base intermediate with dihydroxyacetone-P of the active site.

The protein belongs to the class I fructose-bisphosphate aldolase family. In terms of assembly, homotetramer. Interacts with ATP6V1E1. Expressed exclusively in Purkinje cells in bands running from anterior to posterior across most of the cerebellum. Expressed at higher levels in the brains of BSE-infected animals.

It carries out the reaction beta-D-fructose 1,6-bisphosphate = D-glyceraldehyde 3-phosphate + dihydroxyacetone phosphate. It participates in carbohydrate degradation; glycolysis; D-glyceraldehyde 3-phosphate and glycerone phosphate from D-glucose: step 4/4. The chain is Fructose-bisphosphate aldolase C (Aldoc) from Mus musculus (Mouse).